The primary structure comprises 137 residues: MDTAIILGLLVAVFYGVGTFFAKIVCEKNPLFQWIVVNIVGIILCLIILLKYKNIIITDQKILTYAIISAVLVVIGSLLLYYALYKGKASIVVPLSSIGPAITVALSILFLKETLTLPQMIGIVLIIIGIILLSISN.

A run of 5 helical transmembrane segments spans residues 4–26 (AIIL…KIVC), 35–57 (IVVN…NIII), 62–84 (ILTY…YYAL), 89–111 (ASIV…ILFL), and 116–135 (TLPQ…LLSI). One can recognise an EamA domain in the interval 13-135 (VFYGVGTFFA…IIIGIILLSI (123 aa)).

The protein localises to the cell membrane. This is an uncharacterized protein from Methanocaldococcus jannaschii (strain ATCC 43067 / DSM 2661 / JAL-1 / JCM 10045 / NBRC 100440) (Methanococcus jannaschii).